A 349-amino-acid chain; its full sequence is Peptide transport system ATP-binding protein SapD (349 aa).

The ABC transporter domain occupies 1–259; that stretch reads MALLDICNLN…PHHPYTQALI (259 aa). ATP is bound at residue 40-47; that stretch reads GESGSGKS.

Belongs to the ABC transporter superfamily.

It localises to the cell inner membrane. Functionally, involved in a peptide intake transport system that plays a role in the resistance to antimicrobial peptides. The polypeptide is Peptide transport system ATP-binding protein SapD (sapD) (Haemophilus influenzae (strain ATCC 51907 / DSM 11121 / KW20 / Rd)).